The chain runs to 155 residues: Cathelicidin-1 (155 aa).

The N-terminal stretch at 1 to 29 (METPRASLSLGRWSLWLLLLGLALPSASA) is a signal peptide. Gln30 carries the pyrrolidone carboxylic acid modification. The propeptide occupies 30–143 (QALSYREAVL…KQPWAPPQAA (114 aa)). Intrachain disulfides connect Cys85–Cys96, Cys107–Cys124, and Cys146–Cys154.

The protein belongs to the cathelicidin family. As to expression, large granules of neutrophils.

It localises to the secreted. Functionally, potent microbicidal activity; active against S.aureus and E.coli. The protein is Cathelicidin-1 (CATHL1) of Bos taurus (Bovine).